The primary structure comprises 775 residues: Rab3 GTPase-activating protein catalytic subunit (775 aa).

Phosphoserine occurs at positions 173, 330, 373, 375, and 384. Positions 324 to 351 (DEGKKTSPSDSMTKAYPADAGKAGGQLG) are disordered. A disordered region spans residues 386 to 414 (AEDLRGNGQESTKKGGPKDMAPLKPEGRL). S458 carries the phosphoserine modification.

The protein belongs to the Rab3-GAP catalytic subunit family. As to quaternary structure, the Rab3 GTPase-activating complex is a heterodimer composed of Rab3gap1 and Rab3gap2. The Rab3 GTPase-activating complex interacts with DMXL2. Interacts with LMAN1.

The protein resides in the cytoplasm. The protein localises to the endoplasmic reticulum. Its subcellular location is the golgi apparatus. It localises to the cis-Golgi network. In terms of biological role, catalytic subunit of the Rab3 GTPase-activating (Rab3GAP) complex composed of RAB3GAP1 and RAB3GAP2, which has GTPase-activating protein (GAP) activity towards various Rab3 subfamily members (RAB3A, RAB3B, RAB3C and RAB3D), RAB5A and RAB43, and guanine nucleotide exchange factor (GEF) activity towards RAB18. As part of the Rab3GAP complex, acts as a GAP for Rab3 proteins by converting active RAB3-GTP to the inactive form RAB3-GDP. Rab3 proteins are involved in regulated exocytosis of neurotransmitters and hormones. The Rab3GAP complex, acts as a GEF for RAB18 by promoting the conversion of inactive RAB18-GDP to the active form RAB18-GTP. Recruits and stabilizes RAB18 at the cis-Golgi membrane where RAB18 is most likely activated. Also involved in RAB18 recruitment at the endoplasmic reticulum (ER) membrane where it maintains proper ER structure. Required for normal eye and brain development. May participate in neurodevelopmental processes such as proliferation, migration and differentiation before synapse formation, and non-synaptic vesicular release of neurotransmitters. The chain is Rab3 GTPase-activating protein catalytic subunit from Rattus norvegicus (Rat).